The chain runs to 138 residues: Small ribosomal subunit protein uS11c (138 aa).

The protein belongs to the universal ribosomal protein uS11 family. Part of the 30S ribosomal subunit.

It localises to the plastid. It is found in the chloroplast. This is Small ribosomal subunit protein uS11c from Phalaenopsis aphrodite subsp. formosana (Moth orchid).